The chain runs to 335 residues: Probable cytosolic iron-sulfur protein assembly protein Ciao1 (335 aa).

WD repeat units follow at residues 12-51 (GHKGRIWGVAWHPKGNVFASCGEDKAIRIWSLTGNTWGTK), 57-96 (GHKRTIREIRWSPCGQYLASASFDATTAIWSKSSGEFECN), 101-140 (GHENEVKSVSWSRSGGLLATCSRDKSVWIWEVAGDDEFEC), 146-185 (PHTQDVKRVVWHPTKDVLASASYDNTIKMFAEEPIDNDWD), 192-231 (SHTSTVWGIDFDADGERLVSCSDDTTIKIWRAYHPGNTAG), 250-289 (QHSRAIYDVSWCKLTGLIATACGDDGIRIFKETSDSKPDE), and 301-335 (AHDQDVNSVQWNPVVAGQLISCSDDGTIKIWKVSE).

Belongs to the WD repeat CIA1 family.

Essential component of the cytosolic iron-sulfur (Fe/S) protein assembly machinery. Required for the maturation of extramitochondrial Fe/S proteins. This is Probable cytosolic iron-sulfur protein assembly protein Ciao1 from Drosophila sechellia (Fruit fly).